A 368-amino-acid polypeptide reads, in one-letter code: MRLMVSGGGTGGHIYPALALIERLKQVEPDTEVLYVGAKRGLETKIVPQAGYRLETMEVQGFRRSLSLENVKTVYLFLKAVAQAKKLIKDFRPDVVLGTGGYVSGAVLYAAAKLGVPTVIHEQNSVVGVTNKFLARYVNEVAIAFEAARSQFPKSSVTMTGNPRAQQVAQRTNSAYSWTEDGLKDGVPTIMIFGGSQGAPRINKAVVEALPSFNEQPYQVIFATGRKRYDDVMGALAGQPIGDNVKVVPYIEDMPDKLPHVDALVSRAGATTIAEVTALGIPTILIPSPYVTANHQVKNAEALVKKGAALMILEDQLDGRSLITQANHLMNDAAVRQKMAANSKAVGHPDASDQLIAVLKKAIADHQK.

Residues 10-12 (TGG), N124, S196, I251, and Q296 contribute to the UDP-N-acetyl-alpha-D-glucosamine site.

The protein belongs to the glycosyltransferase 28 family. MurG subfamily.

The protein resides in the cell membrane. The enzyme catalyses Mur2Ac(oyl-L-Ala-gamma-D-Glu-L-Lys-D-Ala-D-Ala)-di-trans,octa-cis-undecaprenyl diphosphate + UDP-N-acetyl-alpha-D-glucosamine = beta-D-GlcNAc-(1-&gt;4)-Mur2Ac(oyl-L-Ala-gamma-D-Glu-L-Lys-D-Ala-D-Ala)-di-trans,octa-cis-undecaprenyl diphosphate + UDP + H(+). Its pathway is cell wall biogenesis; peptidoglycan biosynthesis. Functionally, cell wall formation. Catalyzes the transfer of a GlcNAc subunit on undecaprenyl-pyrophosphoryl-MurNAc-pentapeptide (lipid intermediate I) to form undecaprenyl-pyrophosphoryl-MurNAc-(pentapeptide)GlcNAc (lipid intermediate II). The polypeptide is UDP-N-acetylglucosamine--N-acetylmuramyl-(pentapeptide) pyrophosphoryl-undecaprenol N-acetylglucosamine transferase (Limosilactobacillus fermentum (strain NBRC 3956 / LMG 18251) (Lactobacillus fermentum)).